Here is a 548-residue protein sequence, read N- to C-terminus: DNA ligase (548 aa).

Glu-196 lines the ATP pocket. The N6-AMP-lysine intermediate role is filled by Lys-198. Positions 203, 218, 250, and 284 each coordinate ATP. Residue Glu-250 participates in a divalent metal cation binding. Residue Glu-345 coordinates a divalent metal cation. The ATP site is built by Arg-361 and Lys-365. The segment at 515 to 548 (EQLIRNSQENTKKTFARLATTYDGPSPNKKLKLN) is disordered.

It belongs to the ATP-dependent DNA ligase family. Requires a divalent metal cation as cofactor.

It catalyses the reaction ATP + (deoxyribonucleotide)n-3'-hydroxyl + 5'-phospho-(deoxyribonucleotide)m = (deoxyribonucleotide)n+m + AMP + diphosphate.. In terms of biological role, able to ligate a double-stranded synthetic DNA substrate containing a single nick and inefficiently ligated a 1 nucleotide gap but did not ligate a 2 nucleotide gap. It is able to ligate short, complementary overhangs but not blunt-ended double-stranded DNA. May be implicated in DNA repair and recombination. The protein is DNA ligase (LIG) of Lepidoptera (butterflies and moths).